Consider the following 254-residue polypeptide: 3-deoxy-manno-octulosonate cytidylyltransferase (254 aa).

The protein belongs to the KdsB family.

It is found in the cytoplasm. The catalysed reaction is 3-deoxy-alpha-D-manno-oct-2-ulosonate + CTP = CMP-3-deoxy-beta-D-manno-octulosonate + diphosphate. Its pathway is nucleotide-sugar biosynthesis; CMP-3-deoxy-D-manno-octulosonate biosynthesis; CMP-3-deoxy-D-manno-octulosonate from 3-deoxy-D-manno-octulosonate and CTP: step 1/1. The protein operates within bacterial outer membrane biogenesis; lipopolysaccharide biosynthesis. Functionally, activates KDO (a required 8-carbon sugar) for incorporation into bacterial lipopolysaccharide in Gram-negative bacteria. The polypeptide is 3-deoxy-manno-octulosonate cytidylyltransferase (Pseudomonas fluorescens (strain SBW25)).